A 1039-amino-acid chain; its full sequence is Error-prone DNA polymerase (1039 aa).

Belongs to the DNA polymerase type-C family. DnaE2 subfamily.

The protein localises to the cytoplasm. The enzyme catalyses DNA(n) + a 2'-deoxyribonucleoside 5'-triphosphate = DNA(n+1) + diphosphate. In terms of biological role, DNA polymerase involved in damage-induced mutagenesis and translesion synthesis (TLS). It is not the major replicative DNA polymerase. The polypeptide is Error-prone DNA polymerase (Corynebacterium diphtheriae (strain ATCC 700971 / NCTC 13129 / Biotype gravis)).